A 156-amino-acid polypeptide reads, in one-letter code: ATP synthase subunit b (156 aa).

A helical transmembrane segment spans residues 7-27; the sequence is LFAQIIVFFGLVWFTMKFVWP.

It belongs to the ATPase B chain family. F-type ATPases have 2 components, F(1) - the catalytic core - and F(0) - the membrane proton channel. F(1) has five subunits: alpha(3), beta(3), gamma(1), delta(1), epsilon(1). F(0) has three main subunits: a(1), b(2) and c(10-14). The alpha and beta chains form an alternating ring which encloses part of the gamma chain. F(1) is attached to F(0) by a central stalk formed by the gamma and epsilon chains, while a peripheral stalk is formed by the delta and b chains.

The protein localises to the cell inner membrane. F(1)F(0) ATP synthase produces ATP from ADP in the presence of a proton or sodium gradient. F-type ATPases consist of two structural domains, F(1) containing the extramembraneous catalytic core and F(0) containing the membrane proton channel, linked together by a central stalk and a peripheral stalk. During catalysis, ATP synthesis in the catalytic domain of F(1) is coupled via a rotary mechanism of the central stalk subunits to proton translocation. Its function is as follows. Component of the F(0) channel, it forms part of the peripheral stalk, linking F(1) to F(0). The sequence is that of ATP synthase subunit b from Neisseria meningitidis serogroup C (strain 053442).